The following is a 259-amino-acid chain: Putative protein phosphatase (259 aa).

Positions 8–255 constitute a PPM-type phosphatase domain; the sequence is LFASLSKKGP…DNITLNLINL (248 aa).

It carries out the reaction O-phospho-L-seryl-[protein] + H2O = L-seryl-[protein] + phosphate. The enzyme catalyses O-phospho-L-threonyl-[protein] + H2O = L-threonyl-[protein] + phosphate. This chain is Putative protein phosphatase, found in Mycoplasma pneumoniae (strain ATCC 29342 / M129 / Subtype 1) (Mycoplasmoides pneumoniae).